Here is a 509-residue protein sequence, read N- to C-terminus: UDP-N-acetylmuramyl-tripeptide synthetase (509 aa).

ATP is bound at residue 124–130 (GTNGKTS). Residues 164–165 (TT), Ser191, and Arg199 contribute to the UDP-N-acetyl-alpha-D-muramoyl-L-alanyl-D-glutamate site. Position 231 is an N6-carboxylysine (Lys231).

It belongs to the MurCDEF family. MurE subfamily. Carboxylation is probably crucial for Mg(2+) binding and, consequently, for the gamma-phosphate positioning of ATP.

It localises to the cytoplasm. It functions in the pathway cell wall biogenesis; peptidoglycan biosynthesis. Catalyzes the addition of an amino acid to the nucleotide precursor UDP-N-acetylmuramoyl-L-alanyl-D-glutamate (UMAG) in the biosynthesis of bacterial cell-wall peptidoglycan. In Tropheryma whipplei (strain TW08/27) (Whipple's bacillus), this protein is UDP-N-acetylmuramyl-tripeptide synthetase.